The chain runs to 430 residues: MNNKIKPSILPGFMELLPKEQLVFNDIVSKITGVYEQNGFLPMDTPIIEKEEVLLAKSAGETEKQVYRIDNEDRKQVLRFDLTVPFSRFAAQYMSDLTFPFKRYQLGKVYRGERNQKGRYREFYQCDVDVVGNGNLSIKNDAFIINMASKALRKIGLDSYKFQISNRKILTGVLEGLNITNMQEVMILIDKYDKITEEQFLSELNKLIGEEKAKVISKVIKISGSSDEVVENLKKVEIKNEMLEKGIEEVEEVIKYLKLFGVEDSEYAINLKIIRGLDYYTGTVFETLLTGNESYGSICSGGRYDNLAQNYTENVLPGVGMSIGITRLFFVLREIGFIENYNSSLNEKYLIVPIGDTFEYCTKILNKLLVNGKSAEIYFEEGKLKKKLTYANKLDIKYVILIGEDEVTNKELVIKDMITGEQKKLNIEEI.

The protein belongs to the class-II aminoacyl-tRNA synthetase family. As to quaternary structure, homodimer.

It is found in the cytoplasm. It catalyses the reaction tRNA(His) + L-histidine + ATP = L-histidyl-tRNA(His) + AMP + diphosphate + H(+). In Clostridium acetobutylicum (strain ATCC 824 / DSM 792 / JCM 1419 / IAM 19013 / LMG 5710 / NBRC 13948 / NRRL B-527 / VKM B-1787 / 2291 / W), this protein is Histidine--tRNA ligase (hisS).